Here is a 500-residue protein sequence, read N- to C-terminus: UPF0371 protein SZO_06760 (500 aa).

Belongs to the UPF0371 family.

This Streptococcus equi subsp. zooepidemicus (strain H70) protein is UPF0371 protein SZO_06760.